The primary structure comprises 117 residues: DNA-binding protein MK1619 (117 aa).

The protein belongs to the PDCD5 family.

The chain is DNA-binding protein MK1619 from Methanopyrus kandleri (strain AV19 / DSM 6324 / JCM 9639 / NBRC 100938).